The sequence spans 228 residues: 7-cyano-7-deazaguanine synthase (228 aa).

10–20 (FSGGQDSTTLA) lines the ATP pocket. Zn(2+) is bound by residues Cys190, Cys205, Cys208, and Cys211.

The protein belongs to the QueC family. Zn(2+) serves as cofactor.

The enzyme catalyses 7-carboxy-7-deazaguanine + NH4(+) + ATP = 7-cyano-7-deazaguanine + ADP + phosphate + H2O + H(+). It participates in purine metabolism; 7-cyano-7-deazaguanine biosynthesis. Functionally, catalyzes the ATP-dependent conversion of 7-carboxy-7-deazaguanine (CDG) to 7-cyano-7-deazaguanine (preQ(0)). This Helicobacter pylori (strain P12) protein is 7-cyano-7-deazaguanine synthase.